Reading from the N-terminus, the 229-residue chain is RNA chaperone ProQ (229 aa).

The segment at 105 to 178 (EAKARVQAQR…PREEKHTPVS (74 aa)) is disordered. Positions 117–136 (QQAKKREAAAAAGDKESAPR) are enriched in basic and acidic residues. A compositionally biased stretch (basic residues) spans 137–146 (RERKPRPAAP). Over residues 147–176 (RRKEGAERKPRAEKPAAKAPRAPREEKHTP) the composition is skewed to basic and acidic residues.

The protein belongs to the ProQ family.

The protein resides in the cytoplasm. In terms of biological role, RNA chaperone with significant RNA binding, RNA strand exchange and RNA duplexing activities. May regulate ProP activity through an RNA-based, post-transcriptional mechanism. The polypeptide is RNA chaperone ProQ (Escherichia fergusonii (strain ATCC 35469 / DSM 13698 / CCUG 18766 / IAM 14443 / JCM 21226 / LMG 7866 / NBRC 102419 / NCTC 12128 / CDC 0568-73)).